Here is a 313-residue protein sequence, read N- to C-terminus: uncharacterized protein (313 aa).

Positions 8, 10, 126, 180, 207, and 262 each coordinate a divalent metal cation.

It belongs to the metallo-dependent hydrolases superfamily. TatD-type hydrolase family. A divalent metal cation serves as cofactor.

Its function is as follows. Putative deoxyribonuclease. This is an uncharacterized protein from Saccharomyces cerevisiae (strain ATCC 204508 / S288c) (Baker's yeast).